The sequence spans 252 residues: Adenosylcobinamide-GDP ribazoletransferase (252 aa).

The next 7 helical transmembrane spans lie at 4 to 24 (LFKG…PYVE), 38 to 58 (PIIG…INYL), 60 to 80 (ISIV…TGML), 113 to 133 (FSVI…HSFL), 141 to 161 (ILMF…ITII), 190 to 210 (LVCI…LLIV), and 232 to 252 (VAGF…CLFT).

The protein belongs to the CobS family. It depends on Mg(2+) as a cofactor.

Its subcellular location is the cell membrane. It carries out the reaction alpha-ribazole + adenosylcob(III)inamide-GDP = adenosylcob(III)alamin + GMP + H(+). The enzyme catalyses alpha-ribazole 5'-phosphate + adenosylcob(III)inamide-GDP = adenosylcob(III)alamin 5'-phosphate + GMP + H(+). It participates in cofactor biosynthesis; adenosylcobalamin biosynthesis; adenosylcobalamin from cob(II)yrinate a,c-diamide: step 7/7. Functionally, joins adenosylcobinamide-GDP and alpha-ribazole to generate adenosylcobalamin (Ado-cobalamin). Also synthesizes adenosylcobalamin 5'-phosphate from adenosylcobinamide-GDP and alpha-ribazole 5'-phosphate. This chain is Adenosylcobinamide-GDP ribazoletransferase, found in Clostridium botulinum (strain Eklund 17B / Type B).